The following is a 60-amino-acid chain: Venom protein 4.1 (60 aa).

Residues 1–26 form the signal peptide; the sequence is MKALCAILLVLFACSVMFEHFSISTA.

Belongs to the non-disulfide-bridged peptide (NDBP) superfamily. As to expression, expressed by the venom gland.

The protein localises to the secreted. This chain is Venom protein 4.1, found in Lychas mucronatus (Chinese swimming scorpion).